A 159-amino-acid polypeptide reads, in one-letter code: Sec-independent protein translocase protein TatB (159 aa).

The chain crosses the membrane as a helical span at residues 1-21 (MIDIGLSKMALIGAVALIVIG).

The protein belongs to the TatB family. As to quaternary structure, the Tat system comprises two distinct complexes: a TatABC complex, containing multiple copies of TatA, TatB and TatC subunits, and a separate TatA complex, containing only TatA subunits. Substrates initially bind to the TatABC complex, which probably triggers association of the separate TatA complex to form the active translocon.

It is found in the cell inner membrane. Its function is as follows. Part of the twin-arginine translocation (Tat) system that transports large folded proteins containing a characteristic twin-arginine motif in their signal peptide across membranes. Together with TatC, TatB is part of a receptor directly interacting with Tat signal peptides. TatB may form an oligomeric binding site that transiently accommodates folded Tat precursor proteins before their translocation. This chain is Sec-independent protein translocase protein TatB, found in Acidovorax sp. (strain JS42).